Reading from the N-terminus, the 461-residue chain is D-phenylhydantoinase (461 aa).

A divalent metal cation-binding residues include His59, His61, and Lys151. N6-carboxylysine is present on Lys151. Tyr156 is a substrate binding site. A divalent metal cation-binding residues include His182 and His239. Residue Ser286 coordinates substrate. Residue Asp313 coordinates a divalent metal cation. Asn335 is a binding site for substrate.

It belongs to the metallo-dependent hydrolases superfamily. Hydantoinase/dihydropyrimidinase family. Homotetramer. Zn(2+) is required as a cofactor. Requires Ni(2+) as cofactor. Co(2+) serves as cofactor. The cofactor is Mn(2+). Post-translationally, carboxylation allows a single lysine to coordinate two divalent metal cations.

The enzyme catalyses D-5-phenylhydantoin + H2O = N-carbamoyl-D-phenylglycine + H(+). Its function is as follows. Catalyzes the stereospecific hydrolysis of the cyclic amide bond of D-hydantoin derivatives with an aromatic side chains at the 5'-position. Has no activity on dihydropyrimidines. The physiological function is unknown. The polypeptide is D-phenylhydantoinase (hyuA) (Escherichia coli (strain K12)).